Consider the following 191-residue polypeptide: UPF0312 protein Sbal_3041 (191 aa).

The N-terminal stretch at 1 to 22 is a signal peptide; that stretch reads MKKQLLSALIGASLLAPMAASA.

This sequence belongs to the UPF0312 family. Type 1 subfamily.

The protein resides in the periplasm. In Shewanella baltica (strain OS155 / ATCC BAA-1091), this protein is UPF0312 protein Sbal_3041.